The primary structure comprises 469 residues: ATP synthase subunit beta (469 aa).

Residue 156-163 (GGAGVGKT) participates in ATP binding.

It belongs to the ATPase alpha/beta chains family. As to quaternary structure, F-type ATPases have 2 components, CF(1) - the catalytic core - and CF(0) - the membrane proton channel. CF(1) has five subunits: alpha(3), beta(3), gamma(1), delta(1), epsilon(1). CF(0) has three main subunits: a(1), b(2) and c(9-12). The alpha and beta chains form an alternating ring which encloses part of the gamma chain. CF(1) is attached to CF(0) by a central stalk formed by the gamma and epsilon chains, while a peripheral stalk is formed by the delta and b chains.

The protein localises to the cell membrane. The catalysed reaction is ATP + H2O + 4 H(+)(in) = ADP + phosphate + 5 H(+)(out). Produces ATP from ADP in the presence of a proton gradient across the membrane. The catalytic sites are hosted primarily by the beta subunits. The sequence is that of ATP synthase subunit beta from Bacillus anthracis (strain CDC 684 / NRRL 3495).